A 660-amino-acid chain; its full sequence is Solute carrier family 5 member 4B (660 aa).

The Cytoplasmic portion of the chain corresponds to 1 to 27 (MASTLSPSITPQTEEPPVVPVRIQNAA). The helical transmembrane segment at 28–48 (DISVIVIYFIVVLAVGLWSMV) threads the bilayer. Over 49–54 (RSNRGT) the chain is Extracellular. The chain crosses the membrane as a helical span at residues 55 to 75 (VGGFFLAGHDMAWWPMGASLF). Residues 76 to 82 (ASNIGSN) lie on the Cytoplasmic side of the membrane. Residues 83–103 (HFVGLAGTGAASGIAIAAVEW) form a helical membrane-spanning segment. The Extracellular portion of the chain corresponds to 104 to 105 (NA). The chain crosses the membrane as a helical span at residues 106 to 126 (LLMVLVLGWVFLPIYIKAGVL). Topologically, residues 127 to 142 (TMPEYLRKRFGGKRLQ) are cytoplasmic. The chain crosses the membrane as a helical span at residues 143–163 (IYLSVLSLFIMVALQTSSIIF). The Extracellular portion of the chain corresponds to 164 to 166 (SGA). The chain crosses the membrane as a helical span at residues 167 to 187 (IFIQLALGLNLYLAVFILLAI). Residues 188–208 (TAFYTVAGGLASVIYTDSVQT) are Cytoplasmic-facing. Residues 209–229 (FIMLLGSLILMGFAFAEVGGY) traverse the membrane as a helical segment. Residues 230-277 (ESFTEKYMNAIPSVVEGDNLTISPKCYTPQPDSFHVFRDPVTGDIPWP) are Extracellular-facing. The chain crosses the membrane as a helical span at residues 278–298 (GLIFGMTILAIWYWCADQVIV). Residues 299–313 (QRCLCGKNMSHVKAA) are Cytoplasmic-facing. A helical transmembrane segment spans residues 314 to 334 (CILCGYLKLLPMFLMVMPGMI). Over 335–380 (SRILYTDKVACVVPSECEKQCGTAVGCTNYAYPTLVLELMPDGLRG) the chain is Extracellular. The chain crosses the membrane as a helical span at residues 381 to 401 (LMLSVMLASLMSSLTSIFNSA). Over 402–423 (STLFTIDLYTKIRKKASERELM) the chain is Cytoplasmic. A helical membrane pass occupies residues 424-444 (IAGRIFGMVLIAVSILWVPLV). At 445-455 (QVSQNGQLFHY) the chain is on the extracellular side. Residues 456-476 (IGSVSSYLGPPLGAVFMLAIF) traverse the membrane as a helical segment. Residues 477 to 484 (FKRVNEQG) are Cytoplasmic-facing. Residues 485–505 (AFWGLMVGLVVGLIRLIAEFV) form a helical membrane-spanning segment. Topologically, residues 506–526 (YGTGSCVAPSNCPKIICGVHY) are extracellular. Residues 527–547 (MYFAIILFFVSIIVILGVSFL) form a helical membrane-spanning segment. The Cytoplasmic portion of the chain corresponds to 548–639 (TEPIPDVHLY…DTSEKPLWRT (92 aa)). Residues 640–660 (VMNINAVLLLGVAVFVHAYFA) traverse the membrane as a helical segment.

Belongs to the sodium:solute symporter (SSF) (TC 2.A.21) family. Expressed in small intestine. Expressed in kidney.

It is found in the cell membrane. The enzyme catalyses D-glucose(out) + 2 Na(+)(out) = D-glucose(in) + 2 Na(+)(in). Its activity is regulated as follows. Inhibited by phlorizin. Low-affinity sodium/D-glucose symporter. Generates D-glucose-induced depolarization in a pH-independent manner. This Mus musculus (Mouse) protein is Solute carrier family 5 member 4B.